Reading from the N-terminus, the 383-residue chain is Gamma-butyrobetaine dioxygenase (383 aa).

Zn(2+) contacts are provided by Cys46, Cys48, Cys51, and His91. His209, Asp211, and His350 together coordinate Fe cation.

It belongs to the gamma-BBH/TMLD family. In terms of assembly, homodimer. Fe(2+) serves as cofactor. Requires L-ascorbate as cofactor.

It is found in the cytoplasm. It catalyses the reaction 4-(trimethylamino)butanoate + 2-oxoglutarate + O2 = carnitine + succinate + CO2. It participates in amine and polyamine biosynthesis; carnitine biosynthesis. In terms of biological role, catalyzes the formation of L-carnitine from gamma-butyrobetaine. The chain is Gamma-butyrobetaine dioxygenase from Pseudomonas sp. (strain AK-1).